The chain runs to 414 residues: Particulate methane monooxygenase alpha subunit (414 aa).

The first 32 residues, Met-1–Ala-32, serve as a signal peptide directing secretion. Cu cation is bound by residues His-33, His-48, His-72, His-137, and His-139. The tract at residues His-33–Thr-172 is cupredoxin domain used to construct soluble pmoB (spmoB). 2 helical membrane passes run Gly-186–Trp-206 and Val-235–Asn-255. Residues Gln-265 to Met-414 are cupredoxin domain used to construct soluble pmoB (spmoB).

M.capsulatus has two forms of methane monooxygenase, a soluble (sMMO) and a membrane-bound (particulate) type (pMMO). The particulate type is a nonamer composed of three alpha:beta:gamma heterotrimeric protomers assembled into a cylindrical structure; the beta and gamma subunits comprise the bulk of the membrane-spanning regions and the soluble regions are derived primarily from alpha subunits which form two antiparallel beta-barrel-like structures each. This assembly, also called pMMO hydroxylase (pMMO-H), is proposed to associate with methanol dehydrogenase (MDH), also designated as pMMO-R, to form the pMMO-C complex which seems to have greater methane monooxygenase activity. Cu(2+) is required as a cofactor.

The protein resides in the membrane. The catalysed reaction is methane + a quinol + O2 = methanol + a quinone + H2O. Functionally, methane monooxygenase is responsible for the initial oxygenation of methane to methanol in methanotrophs. At least in vitro, specific quinols can replace NADH as reductants. This chain is Particulate methane monooxygenase alpha subunit (pmoB1), found in Methylococcus capsulatus (strain ATCC 33009 / NCIMB 11132 / Bath).